We begin with the raw amino-acid sequence, 205 residues long: Small ribosomal subunit protein uS4 (205 aa).

The segment covering 1-16 (MSKRESAKHKIDRRLG) has biased composition (basic and acidic residues). The disordered stretch occupies residues 1–46 (MSKRESAKHKIDRRLGENIWGRPKSPVNRREYGPGQHGQRRKGKLS). An S4 RNA-binding domain is found at 94-157 (SRLDAVVYRA…KQLAIVLEAV (64 aa)).

The protein belongs to the universal ribosomal protein uS4 family. Part of the 30S ribosomal subunit. Contacts protein S5. The interaction surface between S4 and S5 is involved in control of translational fidelity.

One of the primary rRNA binding proteins, it binds directly to 16S rRNA where it nucleates assembly of the body of the 30S subunit. In terms of biological role, with S5 and S12 plays an important role in translational accuracy. This Brucella abortus (strain S19) protein is Small ribosomal subunit protein uS4.